Here is a 766-residue protein sequence, read N- to C-terminus: Serine/threonine-protein kinase B-raf (766 aa).

Residues 1–13 are compositionally biased toward gly residues; the sequence is MAALSGGGGGGAE. Residues 1 to 38 are disordered; the sequence is MAALSGGGGGGAEPGQALFNGDMEPEAGAGAGAAASSA. Ala2 is modified (N-acetylalanine). Ser151 bears the Phosphoserine mark. The region spanning 155–227 is the RBD domain; sequence PIVRVFLPNK…TGEELHVEVL (73 aa). The Phorbol-ester/DAG-type zinc-finger motif lies at 234 to 280; that stretch reads THNFVRKTFFTLAFCDFCRKLLFQGFRCQTCGYKFHQRCSTEVPLMC. Zn(2+) contacts are provided by His235, Cys248, Cys251, Cys261, Cys264, His269, Cys272, and Cys280. The segment at 308–454 is disordered; it reads AETALTSGSS…DSSDDWEIPD (147 aa). Positions 314 to 341 are enriched in low complexity; the sequence is SGSSPSAPASDSIGPQILTSPSPSKSIP. Phosphoserine is present on Ser333. A compositionally biased stretch (basic and acidic residues) spans 348-363; the sequence is PADEDHRNQFGQRDRS. Residue Ser365 is modified to Phosphoserine; by SGK1. Thr373 is modified (phosphothreonine; by autocatalysis). Thr396 carries the post-translational modification Phosphothreonine. The residue at position 399 (Ser399) is a Phosphoserine. Phosphothreonine is present on Thr401. A compositionally biased stretch (basic and acidic residues) spans 423–447; the sequence is QRERKSSSSSEDRNRMKTLGRRDSS. Ser446 and Ser447 each carry phosphoserine. The region spanning 457–717 is the Protein kinase domain; that stretch reads ITVGQRIGSG…PQILASIELL (261 aa). ATP-binding positions include 463 to 471 and Lys483; that span reads IGSGSFGTV. Catalysis depends on Asp576, which acts as the Proton acceptor. Residue Lys578 forms a Glycyl lysine isopeptide (Lys-Gly) (interchain with G-Cter in ubiquitin) linkage. The residue at position 671 (Arg671) is an Omega-N-methylarginine; by PRMT5. A phosphoserine mark is found at Ser729 and Ser750. Thr753 carries the phosphothreonine; by MAPK1 modification.

Belongs to the protein kinase superfamily. TKL Ser/Thr protein kinase family. RAF subfamily. Monomer. Homodimer. Heterodimerizes with RAF1, and the heterodimer possesses a highly increased kinase activity compared to the respective homodimers or monomers. Heterodimerization is mitogen-regulated and enhanced by 14-3-3 proteins. MAPK1/ERK2 activation can induce a negative feedback that promotes the dissociation of the heterodimer by phosphorylating BRAF at Thr-753. Heterodimerizes (via N-terminus) with KSR1 (via N-terminus) or KSR2 (via N-terminus) in a MAP2K1-dependent manner. Interacts with MAP2K1 and MAP2K2. Found in a complex with at least BRAF, HRAS, MAP2K1, MAPK3 and RGS14. Interacts with RIT1. Interacts (via N-terminus) with RGS14 (via RBD domains); the interaction mediates the formation of a ternary complex with RAF1, a ternary complex inhibited by GNAI1. Interacts with DGKH. Interacts with PRMT5. Interacts with KSR2. Interacts with AKAP13, MAP2K1 and KSR1. Identified in a complex with AKAP13, MAP2K1 and KSR1. Interacts with FNIP1 and FNIP2. Zn(2+) serves as cofactor. In terms of processing, phosphorylation at Ser-365 by SGK1 inhibits its activity. Phosphorylation at Thr-753 by MAPK1. Dephosphorylation of Ser-365 by the SHOC2-MRAS-PP1c (SMP) complex consisting of SHOC2, GTP-bound M-Ras/MRAS and the catalytic subunit of protein phosphatase 1 (PPP1CA, PPP1CB or PPP1CC); this relieves inactivation and stimulates kinase activity. Methylation at Arg-671 decreases stability and kinase activity. Post-translationally, ubiquitinated by RNF149; which leads to proteasomal degradation. Polyubiquitinated at Lys-578 in response to EGF. Brain and testis.

It localises to the nucleus. The protein resides in the cytoplasm. It is found in the cell membrane. It carries out the reaction L-seryl-[protein] + ATP = O-phospho-L-seryl-[protein] + ADP + H(+). It catalyses the reaction L-threonyl-[protein] + ATP = O-phospho-L-threonyl-[protein] + ADP + H(+). Its activity is regulated as follows. In quiescent cells, maintained in an inactive state via an intramolecular interaction between the protein kinase and N-terminal domains. Following mitogen-mediated cell activation, binds via its RGB domain to active HRAS (GTP-bound) which releases the inhibitory intramolecular interaction between the two domains. This allows the MAP2K1-mediated dimerization of KSR1 or KSR2, and BRAF which activates BRAF. In terms of biological role, protein kinase involved in the transduction of mitogenic signals from the cell membrane to the nucleus. Phosphorylates MAP2K1, and thereby activates the MAP kinase signal transduction pathway. Phosphorylates PFKFB2. May play a role in the postsynaptic responses of hippocampal neurons. The polypeptide is Serine/threonine-protein kinase B-raf (Homo sapiens (Human)).